Consider the following 147-residue polypeptide: SPI-1 type 3 secretion system pilotin (147 aa).

The signal sequence occupies residues 1 to 15; sequence MKKFYSCLPVFLLIG. Cys16 carries N-palmitoyl cysteine lipidation. Cys16 carries the S-diacylglycerol cysteine lipid modification.

This sequence belongs to the InvH family.

The protein resides in the cell outer membrane. Involved in the synthesis of the type III secretion system (T3SS), also called injectisome, which is used to inject bacterial effector proteins into eukaryotic host cells. Pilot protein that is required for the proper localization of the secretin InvG/SctC in the outer membrane. Necessary for efficient adherence and entry of these organisms into cultured epithelial cells. This Salmonella choleraesuis (strain SC-B67) protein is SPI-1 type 3 secretion system pilotin.